Reading from the N-terminus, the 385-residue chain is Anhydro-N-acetylmuramic acid kinase (385 aa).

12–19 contributes to the ATP binding site; sequence GTSLDGID.

The protein belongs to the anhydro-N-acetylmuramic acid kinase family.

The enzyme catalyses 1,6-anhydro-N-acetyl-beta-muramate + ATP + H2O = N-acetyl-D-muramate 6-phosphate + ADP + H(+). It participates in amino-sugar metabolism; 1,6-anhydro-N-acetylmuramate degradation. The protein operates within cell wall biogenesis; peptidoglycan recycling. In terms of biological role, catalyzes the specific phosphorylation of 1,6-anhydro-N-acetylmuramic acid (anhMurNAc) with the simultaneous cleavage of the 1,6-anhydro ring, generating MurNAc-6-P. Is required for the utilization of anhMurNAc either imported from the medium or derived from its own cell wall murein, and thus plays a role in cell wall recycling. This Bacillus thuringiensis (strain Al Hakam) protein is Anhydro-N-acetylmuramic acid kinase.